Here is a 278-residue protein sequence, read N- to C-terminus: MIVNNTPVETYELNGVPILVKREDLCAPLPGPSFSKIRGVVAHIKNRPETTIGCLDTYHSKAGWAVAYVCQQLGKQAVDYWPRFKRDGAADAPRVQQQHARQLGADLVDIPAGRSAILYHTAKKHLRENYHDSYLMPNALKLPESITENAAEAVRTAPHLPDSGTLVISISSGTVAAGVLKGFEEAGLLRNYNVILHMGYSRSQDATREYIEKAAGLTLGDRIKFIDEGYGYADAARDASAPFPCNPFYDLKAWKWLSNPTNLETILDGPIVFWNIGE.

The protein belongs to the pyridoxal-phosphate-dependent aminodecarboxylase family.

It carries out the reaction 5-C(alpha)-glycyl-dTMP in DNA + H(+) = 5-aminoethyl-dUMP in DNA + CO2. Functionally, converts 5-Calpha-glycinylthymidine (Calpha-GlyT) into 5-aminoethyl-2'-deoxyuridine (5-NedU) as a step in the pathway leading to thymidine hypermodifications in the viral genome. As a final result of the pathway of hypermodification, 5-aminoethyl-2'-deoxyuridine (5-NedU) substitutes for about 30% of thymidines in the viral DNA. These modifications probably prevent degradation of viral genome by the host restriction-modification antiviral defense system. The chain is Glycyl-dTMP PLP-dependent decarboxylase from Pseudomonas aeruginosa.